Consider the following 325-residue polypeptide: E3 ubiquitin-protein ligase EL5 (325 aa).

Residues 1-29 (MVRGVEQGGPAMDESSSSSSPSPVSAPAG) form a disordered region. Residues 15–28 (SSSSSSPSPVSAPA) are compositionally biased toward low complexity. The helical transmembrane segment at 38–58 (IATVAAVLIVFAALTLAFVLL) threads the bilayer. Positions 70 to 105 (TTTSTSGRGRRPRPRRRSGSGGDGGTGGGVDPEVLR) are disordered. Positions 77-87 (RGRRPRPRRRS) are enriched in basic residues. Residues 88–99 (GSGGDGGTGGGV) are compositionally biased toward gly residues. The segment at 134–176 (CAVCLAELEDGEEARFLPRCGHGFHAECVDMWLGSHSTCPLCR) adopts an RING-type; atypical zinc-finger fold. Disordered stretches follow at residues 267-289 (GAAG…GDVE) and 303-325 (AATP…HVRN). The segment covering 268 to 281 (AAGSTSSCSCATGG) has biased composition (low complexity).

It is found in the cell membrane. It catalyses the reaction S-ubiquitinyl-[E2 ubiquitin-conjugating enzyme]-L-cysteine + [acceptor protein]-L-lysine = [E2 ubiquitin-conjugating enzyme]-L-cysteine + N(6)-ubiquitinyl-[acceptor protein]-L-lysine.. Its pathway is protein modification; protein ubiquitination. In terms of biological role, functions as an E3 ubiquitin-protein ligase in cooperation with the E2 ubiquitin conjugating enzymes UBC5A and UBC5B. Involved in root development. Required for the maintenance of cell viability after the initiation of root primordial formation. May mediate the degradation of cytotoxic proteins produced in root cells after the actions of auxin, cytokinin and jasmonic acid. Mediates 'Lys-48'-linked polyubiquitination of MBP in vitro. The polypeptide is E3 ubiquitin-protein ligase EL5 (EL5.1) (Oryza sativa subsp. japonica (Rice)).